The primary structure comprises 379 residues: Mating-type protein MAT-1 (379 aa).

The alpha box DNA-binding region spans Lys60–Arg117.

This sequence belongs to the MATALPHA1 family.

The protein resides in the nucleus. Functionally, mating type proteins are sequence specific DNA-binding proteins that act as master switches in fungal differentiation by controlling gene expression in a cell type-specific fashion. Transcriptional activator that induces the transcription of alpha-specific genes. The protein is Mating-type protein MAT-1 (MAT1) of Cochliobolus carbonum (strain 26-R-13) (Maize leaf spot fungus).